Consider the following 339-residue polypeptide: Tetraacyldisaccharide 4'-kinase (339 aa).

62–69 (VAGGTGKT) contacts ATP.

The protein belongs to the LpxK family.

It carries out the reaction a lipid A disaccharide + ATP = a lipid IVA + ADP + H(+). It participates in glycolipid biosynthesis; lipid IV(A) biosynthesis; lipid IV(A) from (3R)-3-hydroxytetradecanoyl-[acyl-carrier-protein] and UDP-N-acetyl-alpha-D-glucosamine: step 6/6. Transfers the gamma-phosphate of ATP to the 4'-position of a tetraacyldisaccharide 1-phosphate intermediate (termed DS-1-P) to form tetraacyldisaccharide 1,4'-bis-phosphate (lipid IVA). The polypeptide is Tetraacyldisaccharide 4'-kinase (Xylella fastidiosa (strain M12)).